Reading from the N-terminus, the 180-residue chain is Endoribonuclease YbeY (180 aa).

His-149, His-153, and His-159 together coordinate Zn(2+).

This sequence belongs to the endoribonuclease YbeY family. Zn(2+) is required as a cofactor.

It localises to the cytoplasm. Single strand-specific metallo-endoribonuclease involved in late-stage 70S ribosome quality control and in maturation of the 3' terminus of the 16S rRNA. The chain is Endoribonuclease YbeY from Prochlorococcus marinus subsp. pastoris (strain CCMP1986 / NIES-2087 / MED4).